Here is a 190-residue protein sequence, read N- to C-terminus: Translation initiation factor IF-3 (190 aa).

It belongs to the IF-3 family. As to quaternary structure, monomer.

Its subcellular location is the cytoplasm. In terms of biological role, IF-3 binds to the 30S ribosomal subunit and shifts the equilibrium between 70S ribosomes and their 50S and 30S subunits in favor of the free subunits, thus enhancing the availability of 30S subunits on which protein synthesis initiation begins. The protein is Translation initiation factor IF-3 of Prochlorococcus marinus (strain MIT 9312).